A 222-amino-acid polypeptide reads, in one-letter code: 7-cyano-7-deazaguanine synthase (222 aa).

Residue 8–18 (LSGGLDSTTCL) coordinates ATP. Zn(2+) contacts are provided by Cys186, Cys194, Cys197, and Cys200.

Belongs to the QueC family. As to quaternary structure, homodimer. It depends on Zn(2+) as a cofactor.

The enzyme catalyses 7-carboxy-7-deazaguanine + NH4(+) + ATP = 7-cyano-7-deazaguanine + ADP + phosphate + H2O + H(+). Its pathway is purine metabolism; 7-cyano-7-deazaguanine biosynthesis. Catalyzes the ATP-dependent conversion of 7-carboxy-7-deazaguanine (CDG) to 7-cyano-7-deazaguanine (preQ(0)). This is 7-cyano-7-deazaguanine synthase from Acetivibrio thermocellus (strain ATCC 27405 / DSM 1237 / JCM 9322 / NBRC 103400 / NCIMB 10682 / NRRL B-4536 / VPI 7372) (Clostridium thermocellum).